A 565-amino-acid chain; its full sequence is MSEQKLALNEYLKTDSDYLRGTIKEGLDSAVTGSFSDGDQQLIKFHGFYQQDDRDLRNERKEQKLEPLYSFMLRARVPGGICSPQQWLGVDKIASTLTSSNSIRLTTRQTFQYHGIPKRNLKTIIQDLDREALDSIAACGDVNRNVMCNPNPVESKLHEQAYAVAKQLSDHLLPHTRAYAEIWLDEEKLLSTEDETVEPVYGKTYLPRKFKMAVAVPPDNDVDVYTNDLGFIAVAENGELVGFNLTAGGGMGSTHGEVETFPRLADDFGFIKTADVMKFAEAVMTVQRDWGNRVNRKRSRLKYTIVDHGYEKFKAEVELRAGVKFEPKRDVVIGDRGDRYGWVEGVDRKWHLTLFIESGRIKDLPGQTLQTGLREIAKIHKGDFRMTSNQNMIIAGVAAEDKATIEGLARKHGLLGQVLTQTRGHSIACVALPTCPLAMAEAERYFPEFIDHIDALQAKHGISEQAIVVRMTGCPNGCARPFAAEIGLVGKAPGRYNLYLGASFEGTRLNKMHRENIQEAEILAELDTLFGRYAVERDAGETFGNFTVRVGVVKAVIDAAKDFHG.

[4Fe-4S] cluster-binding residues include Cys-429, Cys-435, Cys-474, and Cys-478. Residue Cys-478 participates in siroheme binding.

This sequence belongs to the nitrite and sulfite reductase 4Fe-4S domain family. In terms of assembly, alpha(8)-beta(8). The alpha component is a flavoprotein, the beta component is a hemoprotein. Siroheme is required as a cofactor. The cofactor is [4Fe-4S] cluster.

The enzyme catalyses hydrogen sulfide + 3 NADP(+) + 3 H2O = sulfite + 3 NADPH + 4 H(+). It participates in sulfur metabolism; hydrogen sulfide biosynthesis; hydrogen sulfide from sulfite (NADPH route): step 1/1. In terms of biological role, component of the sulfite reductase complex that catalyzes the 6-electron reduction of sulfite to sulfide. This is one of several activities required for the biosynthesis of L-cysteine from sulfate. This Shewanella baltica (strain OS223) protein is Sulfite reductase [NADPH] hemoprotein beta-component.